Consider the following 426-residue polypeptide: Bile acid CoA-transferase BaiF (426 aa).

The Nucleophile role is filled by Asp-168.

Belongs to the CoA-transferase III family.

It carries out the reaction lithocholoyl-CoA + cholate = choloyl-CoA + lithocholate. It catalyses the reaction deoxycholoyl-CoA + cholate = choloyl-CoA + deoxycholate. The enzyme catalyses allodeoxycholoyl-CoA + cholate = allodeoxycholate + choloyl-CoA. The catalysed reaction is allocholate + deoxycholoyl-CoA = allocholoyl-CoA + deoxycholate. It carries out the reaction allocholate + lithocholoyl-CoA = allocholoyl-CoA + lithocholate. It catalyses the reaction allocholate + allodeoxycholoyl-CoA = allocholoyl-CoA + allodeoxycholate. The enzyme catalyses lithocholoyl-CoA + chenodeoxycholate = chenodeoxycholoyl-CoA + lithocholate. The catalysed reaction is ursodeoxycholate + deoxycholoyl-CoA = ursodeoxycholoyl-CoA + deoxycholate. It carries out the reaction ursodeoxycholate + lithocholoyl-CoA = ursodeoxycholoyl-CoA + lithocholate. It catalyses the reaction allodeoxycholoyl-CoA + ursodeoxycholate = ursodeoxycholoyl-CoA + allodeoxycholate. The enzyme catalyses beta-muricholate + lithocholoyl-CoA = beta-muricholoyl-CoA + lithocholate. The catalysed reaction is beta-muricholate + deoxycholoyl-CoA = beta-muricholoyl-CoA + deoxycholate. It carries out the reaction beta-muricholate + allodeoxycholoyl-CoA = beta-muricholoyl-CoA + allodeoxycholate. It catalyses the reaction choloyl-CoA + H2O = cholate + CoA + H(+). The enzyme catalyses chenodeoxycholoyl-CoA + H2O = chenodeoxycholate + CoA + H(+). It functions in the pathway lipid metabolism; bile acid biosynthesis. In terms of biological role, functions in the bile acid 7alpha-dehydroxylation pathway, which forms secondary bile acids via the 7alpha-dehydroxylation of primary bile acids, and is carried out by intestinal anaerobic bacteria. Acts as a bile acid CoA transferase with broad bile acid substrate specificity. Catalyzes the transfer of the CoA moiety of secondary bile acid-CoA compounds to primary bile acids. Can use lithocholoyl-CoA, deoxycholoyl-CoA and allodeoxycholoyl-CoA as bile acid CoA donors and cholate, allocholate, chenodeoxycholate, ursodeoxycholate, and beta-muricholate as bile acid CoA acceptors. Also displays CoA hydrolase activity, being able to catalyze the hydrolysis of choloyl-CoA, 3-dehydrocholoyl-CoA, and chenodeoxycholoyl-CoA, releasing CoA and the corresponding free bile acid. However, this latter activity may not represent the actual activity of this enzyme, since using a transferase rather than hydrolase, the bacteria conserve the thioester bond energy, saving ATP molecules. Shows no hydrolytic activity with acetyl-CoA, isovaleryl-CoA, palmitoyl-CoA, or phenylacetyl-CoA as substrates. This Clostridium scindens (strain JCM 10418 / VPI 12708) protein is Bile acid CoA-transferase BaiF.